A 146-amino-acid chain; its full sequence is D-aminoacyl-tRNA deacylase (146 aa).

Residues 137–138 carry the Gly-cisPro motif, important for rejection of L-amino acids motif; that stretch reads GP.

The protein belongs to the DTD family. Homodimer.

It is found in the cytoplasm. The catalysed reaction is glycyl-tRNA(Ala) + H2O = tRNA(Ala) + glycine + H(+). It catalyses the reaction a D-aminoacyl-tRNA + H2O = a tRNA + a D-alpha-amino acid + H(+). Its function is as follows. An aminoacyl-tRNA editing enzyme that deacylates mischarged D-aminoacyl-tRNAs. Also deacylates mischarged glycyl-tRNA(Ala), protecting cells against glycine mischarging by AlaRS. Acts via tRNA-based rather than protein-based catalysis; rejects L-amino acids rather than detecting D-amino acids in the active site. By recycling D-aminoacyl-tRNA to D-amino acids and free tRNA molecules, this enzyme counteracts the toxicity associated with the formation of D-aminoacyl-tRNA entities in vivo and helps enforce protein L-homochirality. This Bacillus thuringiensis (strain Al Hakam) protein is D-aminoacyl-tRNA deacylase.